A 367-amino-acid polypeptide reads, in one-letter code: Protein SUPPRESSOR OF FRI 4 (367 aa).

The BED-type zinc-finger motif lies at 7-66 (RATEKVWCYYCDREFDDEKILVQHQKAKHFKCHVCHKKLSTASGMVIHVLQVHKENVTKV). Cys-38, Cys-41, His-54, and His-59 together coordinate Zn(2+). Positions 246-309 (PFSAPLPVGG…PPVIANKAPS (64 aa)) are disordered. Polar residues predominate over residues 273–295 (PNNSIPGGTNAHSYASGPNTSGP).

In terms of assembly, homodimer. Component of the transcription activator complex FRI-C composed of FRI, FRL1, SUF4, FLX and FES1. Interacts with LD, ASHH2, FRL1, (via C-terminus) with FRI (via C-terminus), and with SWC6, a component of the SWR1 chromatin-remodeling complex. Binds to MED18 to regulate flowering time; recruits MED18 to FLC promoter. As to expression, expressed in root, shoot apex, leaves, stem and flowers. Expressed in expanding leaves, in the vasculature of fully expanded leaves, in the inflorescence, throughout young floral primordia, in the carpels of older flowers and in fertilized ovules.

Its subcellular location is the nucleus. In terms of biological role, sequence-specific DNA binding factor that recognizes the 5'-CCAAATTTTAAGTTT-3' sequence. Recruits the FRI-C complex to the FLC promoter. Required for FRI-mediated FLC activation, but has no effect on the expression of MAF1, MAF2, MAF3, MAF5, UFC and CO. Dispensable for the reactivation of FLC in early embryogenesis, but required to maintain high levels of FLC expression in later embryonic and vegetative development. This chain is Protein SUPPRESSOR OF FRI 4, found in Arabidopsis thaliana (Mouse-ear cress).